A 539-amino-acid chain; its full sequence is GMP synthase [glutamine-hydrolyzing] (539 aa).

Residues 20–215 (TILILDFGSQ…AIEICHAKPN (196 aa)) enclose the Glutamine amidotransferase type-1 domain. Cys96 serves as the catalytic Nucleophile. Active-site residues include His189 and Glu191. The GMPS ATP-PPase domain occupies 216-413 (WSMENFVDKE…LGIEHSLVWR (198 aa)). 244-250 (SGGVDST) is an ATP binding site. Positions 317, 475, 531, and 537 each coordinate XMP.

As to quaternary structure, homodimer. It depends on Mg(2+) as a cofactor.

It localises to the cytoplasm. The protein localises to the cytosol. It catalyses the reaction XMP + L-glutamine + ATP + H2O = GMP + L-glutamate + AMP + diphosphate + 2 H(+). Its pathway is purine metabolism; GMP biosynthesis; GMP from XMP (L-Gln route): step 1/1. Catalyzes the conversion of xanthine monophosphate (XMP) to GMP in the presence of glutamine and ATP through an adenyl-XMP intermediate. This is GMP synthase [glutamine-hydrolyzing] from Schizosaccharomyces pombe (strain 972 / ATCC 24843) (Fission yeast).